A 186-amino-acid polypeptide reads, in one-letter code: Acetyltransferase PA5475 (186 aa).

In terms of domain architecture, N-acetyltransferase spans 31-186 (VLIRPLREED…STQVIHRLAL (156 aa)). Residues 117 to 119 (VTI), Gly-125, Asn-156, and 161 to 163 (DLC) each bind CoA.

Its function is as follows. Catalyzes the transfer of an acetyl group from acetyl coenzyme A (AcCoA) to an acceptor substrate and releases both CoA and the acetylated product. It prefers the antibiotic chloramphenicol. The polypeptide is Acetyltransferase PA5475 (Pseudomonas aeruginosa (strain ATCC 15692 / DSM 22644 / CIP 104116 / JCM 14847 / LMG 12228 / 1C / PRS 101 / PAO1)).